Consider the following 230-residue polypeptide: Large ribosomal subunit protein uL3 (230 aa).

Disordered stretches follow at residues 125 to 149 (QAIG…SLGD) and 210 to 230 (PNPK…VKNE).

It belongs to the universal ribosomal protein uL3 family. In terms of assembly, part of the 50S ribosomal subunit. Forms a cluster with proteins L14 and L19.

In terms of biological role, one of the primary rRNA binding proteins, it binds directly near the 3'-end of the 23S rRNA, where it nucleates assembly of the 50S subunit. The chain is Large ribosomal subunit protein uL3 from Mesomycoplasma hyopneumoniae (strain J / ATCC 25934 / NCTC 10110) (Mycoplasma hyopneumoniae).